The sequence spans 110 residues: Small ribosomal subunit protein bS18 (110 aa).

Residues 1 to 18 (MSEATTTTTTTSAPRPGG) show a composition bias toward low complexity. The segment at 1 to 41 (MSEATTTTTTTSAPRPGGRPSGPRPDRGPGGPRKKRPFQRR) is disordered. The span at 32–41 (PRKKRPFQRR) shows a compositional bias: basic residues.

It belongs to the bacterial ribosomal protein bS18 family. In terms of assembly, part of the 30S ribosomal subunit. Forms a tight heterodimer with protein bS6.

Binds as a heterodimer with protein bS6 to the central domain of the 16S rRNA, where it helps stabilize the platform of the 30S subunit. This Trichlorobacter lovleyi (strain ATCC BAA-1151 / DSM 17278 / SZ) (Geobacter lovleyi) protein is Small ribosomal subunit protein bS18.